Here is a 120-residue protein sequence, read N- to C-terminus: Large ribosomal subunit protein uL18 (120 aa).

Belongs to the universal ribosomal protein uL18 family. As to quaternary structure, part of the 50S ribosomal subunit; part of the 5S rRNA/L5/L18/L25 subcomplex. Contacts the 5S and 23S rRNAs.

Functionally, this is one of the proteins that bind and probably mediate the attachment of the 5S RNA into the large ribosomal subunit, where it forms part of the central protuberance. The chain is Large ribosomal subunit protein uL18 from Halalkalibacterium halodurans (strain ATCC BAA-125 / DSM 18197 / FERM 7344 / JCM 9153 / C-125) (Bacillus halodurans).